Here is a 151-residue protein sequence, read N- to C-terminus: Calmodulin-like protein 9 (151 aa).

4 consecutive EF-hand domains span residues 8–43 (EQIQEFYEAFCLIDKDSDGFITKEKLTKVMKSMGKN), 44–79 (PKAEQLQQMMSDVDIFGNGGITFDDFLYIMAQNTSQ), 81–116 (SASDELIEVFRVFDRDGDGLISQLELGEGMKDMGMK), and 117–151 (ITAEEAEHMVREADLDGDGFLSFHEFSKMMIAASY). Residues D94, D96, D98, E105, D130, D132, D134, and E141 each contribute to the Ca(2+) site.

This sequence belongs to the calmodulin family. As to quaternary structure, interacts with IQD1. Interacts with ILK1. Binds to ABCG36. Expressed in leaves, flowers and siliques.

In terms of biological role, potential calcium sensor. This Arabidopsis thaliana (Mouse-ear cress) protein is Calmodulin-like protein 9.